The chain runs to 268 residues: Undecaprenyl-diphosphatase (268 aa).

7 helical membrane passes run 47–67 (FTVL…FAKL), 83–103 (FVIG…IAGK), 109–129 (LFNP…LMWV), 144–164 (FPLP…IPGV), 184–204 (AAEF…AYDF), 218–238 (TVAI…KAFL), and 246–266 (FTFF…ALAL).

Belongs to the UppP family.

It is found in the cell inner membrane. The catalysed reaction is di-trans,octa-cis-undecaprenyl diphosphate + H2O = di-trans,octa-cis-undecaprenyl phosphate + phosphate + H(+). In terms of biological role, catalyzes the dephosphorylation of undecaprenyl diphosphate (UPP). Confers resistance to bacitracin. The protein is Undecaprenyl-diphosphatase of Nitrobacter winogradskyi (strain ATCC 25391 / DSM 10237 / CIP 104748 / NCIMB 11846 / Nb-255).